A 312-amino-acid polypeptide reads, in one-letter code: MEGECRVLSIQSHVVRGYVGNRAAMFPLQVLGFEVDAVNSVQFSNHTGYAHWKGQVLKSQELHELYEGLKVNDVNKYDYVLTGYTRDKSFLAMVVDIVRELKQQNSRLVYVCDPVMGDKWNGEGSMYVPQDLLPVYRDKVVPVADIITPNQFEAELLSGRKIHSQEEAFEVMDMLHCMGPDTVVITSSDLPSSQGSDYLIALGSQRMRKPDGSTVTQRIRMEMRKVEAVFVGTGDLFAAMLLAWTHKHPDNLKVACEKTVSAMQHVLQRTIRCAKAEAGEGQKPSPAQLELRMVQSKRDIEDPEIVVQATVL.

At Met1 the chain carries N-acetylmethionine. Pyridoxal-binding residues include Ser12 and Thr47. Thr47 lines the pyridoxal 5'-phosphate pocket. Position 59 is a phosphoserine (Ser59). Asp113 serves as a coordination point for ATP. Position 113 (Asp113) interacts with Na(+). Mg(2+) is bound at residue Asp118. Na(+) is bound at residue Thr148. 150–153 (NQFE) provides a ligand contact to ATP. The residue at position 164 (Ser164) is a Phosphoserine. A Na(+)-binding site is contributed by Thr186. 186–187 (TS) lines the ATP pocket. A Phosphoserine modification is found at Ser213. ATP is bound by residues 226-228 (VEA) and Thr233. 234–235 (GD) contacts pyridoxal 5'-phosphate. The active-site Proton acceptor is the Asp235. Ser285 carries the post-translational modification Phosphoserine.

The protein belongs to the pyridoxine kinase family. Homodimer. Requires Zn(2+) as cofactor. It depends on Mg(2+) as a cofactor.

It is found in the cytoplasm. Its subcellular location is the cytosol. It carries out the reaction pyridoxal + ATP = pyridoxal 5'-phosphate + ADP + H(+). The catalysed reaction is pyridoxamine + ATP = pyridoxamine 5'-phosphate + ADP + H(+). It catalyses the reaction pyridoxine + ATP = pyridoxine 5'-phosphate + ADP + H(+). The protein operates within cofactor metabolism; pyridoxal 5'-phosphate salvage; pyridoxal 5'-phosphate from pyridoxal: step 1/1. Its pathway is cofactor metabolism; pyridoxal 5'-phosphate salvage; pyridoxine 5'-phosphate from pyridoxine: step 1/1. It functions in the pathway cofactor metabolism; pyridoxal 5'-phosphate salvage; pyridoxamine 5'-phosphate from pyridoxamine: step 1/1. Its activity is regulated as follows. Activity is increased in the presence of K(+)or Na(+). Catalyzes the phosphorylation of the dietary vitamin B6 vitamers pyridoxal (PL), pyridoxine (PN) and pyridoxamine (PM) to form pyridoxal 5'-phosphate (PLP), pyridoxine 5'-phosphate (PNP) and pyridoxamine 5'-phosphate (PMP), respectively. PLP is the active form of vitamin B6, and acts as a cofactor for over 140 different enzymatic reactions. The polypeptide is Pyridoxal kinase (Mus musculus (Mouse)).